Consider the following 396-residue polypeptide: Elongation factor Tu (396 aa).

The tr-type G domain maps to Lys-10–Glu-206. The interval Gly-19–Thr-26 is G1. Gly-19–Thr-26 is a GTP binding site. Thr-26 is a Mg(2+) binding site. The interval Gly-60–Asn-64 is G2. Residues Asp-81–Gly-84 form a G3 region. Residues Asp-81 to His-85 and Asn-136 to Asp-139 contribute to the GTP site. Positions Asn-136–Asp-139 are G4. The G5 stretch occupies residues Ser-174–Lys-176.

This sequence belongs to the TRAFAC class translation factor GTPase superfamily. Classic translation factor GTPase family. EF-Tu/EF-1A subfamily. Monomer.

It is found in the cytoplasm. The enzyme catalyses GTP + H2O = GDP + phosphate + H(+). Functionally, GTP hydrolase that promotes the GTP-dependent binding of aminoacyl-tRNA to the A-site of ribosomes during protein biosynthesis. This Burkholderia cenocepacia (strain HI2424) protein is Elongation factor Tu.